A 217-amino-acid polypeptide reads, in one-letter code: Glycosylphosphatidylinositol anchor biosynthesis protein 11 (217 aa).

Asn-20 carries N-linked (GlcNAc...) asparagine glycosylation. 6 helical membrane-spanning segments follow: residues 41 to 61, 66 to 86, 107 to 127, 139 to 159, 169 to 189, and 197 to 217; these read VYVR…LYWF, DFNL…YLIF, FITL…IVLF, WLLA…VFNC, YFIS…LDWD, and VPLI…GGYI.

Belongs to the PIGF family.

The protein resides in the endoplasmic reticulum membrane. It participates in glycolipid biosynthesis; glycosylphosphatidylinositol-anchor biosynthesis. Functionally, acts in the GPI biosynthetic pathway between GlcNAc-PI synthesis and GPI transfer to protein. The polypeptide is Glycosylphosphatidylinositol anchor biosynthesis protein 11 (GPI11) (Kluyveromyces lactis (strain ATCC 8585 / CBS 2359 / DSM 70799 / NBRC 1267 / NRRL Y-1140 / WM37) (Yeast)).